Reading from the N-terminus, the 61-residue chain is MAKKALVEKAARKPKYAVRGYTRCQRCGRPRSVYRVFGLCRVCLRQMAHRGELPGVTKSSW.

Residues Cys-24, Cys-27, Cys-40, and Cys-43 each coordinate Zn(2+).

This sequence belongs to the universal ribosomal protein uS14 family. Zinc-binding uS14 subfamily. In terms of assembly, part of the 30S ribosomal subunit. Contacts proteins S3 and S10. Zn(2+) is required as a cofactor.

Its function is as follows. Binds 16S rRNA, required for the assembly of 30S particles and may also be responsible for determining the conformation of the 16S rRNA at the A site. In Parafrankia sp. (strain EAN1pec), this protein is Small ribosomal subunit protein uS14.